Here is a 485-residue protein sequence, read N- to C-terminus: Glutamyl-tRNA(Gln) amidotransferase subunit A (485 aa).

Active-site charge relay system residues include Lys-74 and Ser-149. Ser-173 (acyl-ester intermediate) is an active-site residue.

The protein belongs to the amidase family. GatA subfamily. Heterotrimer of A, B and C subunits.

The catalysed reaction is L-glutamyl-tRNA(Gln) + L-glutamine + ATP + H2O = L-glutaminyl-tRNA(Gln) + L-glutamate + ADP + phosphate + H(+). Allows the formation of correctly charged Gln-tRNA(Gln) through the transamidation of misacylated Glu-tRNA(Gln) in organisms which lack glutaminyl-tRNA synthetase. The reaction takes place in the presence of glutamine and ATP through an activated gamma-phospho-Glu-tRNA(Gln). The protein is Glutamyl-tRNA(Gln) amidotransferase subunit A of Herminiimonas arsenicoxydans.